Here is an 842-residue protein sequence, read N- to C-terminus: MNKITKYIDALPLSDAEKSALPDTSLQAVHQALDDEHQTFAREDDSPLGSVKARLAHSWPDSLSGDQLVKDDEGRTQLHAMPKARRSSMIPDPWRTNPVGRFWDRLRGRDVTPRYLSRLTQEERESEQKWRTVGTIRRYILLLLTLSQTVVATWYMKTILPYQGWALINPADMVGQNLWISFMQLLPYVLQSGILILFAVLFCWVSAGFWTALMGFLQLLIGRDKYSISASTVGDEPLNPAHRTALIMPICNEDVDRVFAGLRATWESVKATGNAAHFDVYILSDSYNPDICVAEQKAWMELIAEVQGEGQIFYRRRRRRVKRKSGNIDDFCRRWGSQYSYMVVLDADSVMTGECLSSLVRLMEANPNAGIIQSSPRASGMDTLYARCQQFATRVYGPLFTAGLHFWQLGESHYWGHNAIIRVKPFIEHCALAPLPGEGNFAGSILSHDFVEAALMRRAGWGVWIAYDLPGSYEELPPNLLDELKRDRRWCQGNLMNFRLFLVRGMHPVHRAVFLTGVMSYLSAPLWFMFLALSTALQVVHALTEPQYFLQPRQLFPVWPQWRPELAIALFASTMVLLFLPKLLSIILVWCKGPKEYGGFIRVTLSLLLEVLFSVLLAPVRMLFHTVFVVSAFLGWEVVWNSPQRDDDSTPWGEAFMRHGSQLLLGLVWAVGMAWLDLRFLFWLAPIVVSLILSPFVSAISSRATVGLRTKRWKLFLIPEEYSPPQVLKDTDAYLTLNRQRSLDDGFMHAVFNPSFNALATAMATARHRHGHILEIARERHVEQALNETPDKLNRDRRLVLLSDPVTMSRLHYRVWAAPEKYSSWVNAYQQLALNPLALKTK.

8 helical membrane passes run 140–160 (ILLLLTLSQTVVATWYMKTIL), 194–214 (ILILFAVLFCWVSAGFWTALM), 513–533 (VFLTGVMSYLSAPLWFMFLAL), 568–588 (IALFASTMVLLFLPKLLSIIL), 600–620 (FIRVTLSLLLEVLFSVLLAPV), 622–642 (MLFHTVFVVSAFLGWEVVWNS), 656–676 (FMRHGSQLLLGLVWAVGMAWL), and 680–700 (FLFWLAPIVVSLILSPFVSAI).

Belongs to the glycosyltransferase 2 family. OpgH subfamily.

It localises to the cell inner membrane. It participates in glycan metabolism; osmoregulated periplasmic glucan (OPG) biosynthesis. In terms of biological role, involved in the biosynthesis of osmoregulated periplasmic glucans (OPGs). This Klebsiella pneumoniae (strain 342) protein is Glucans biosynthesis glucosyltransferase H.